The chain runs to 318 residues: Ribosomal RNA small subunit methyltransferase H (318 aa).

Residues 34–36 (GGH), Asp57, Leu91, Asp110, and Gln117 contribute to the S-adenosyl-L-methionine site.

Belongs to the methyltransferase superfamily. RsmH family.

Its subcellular location is the cytoplasm. The enzyme catalyses cytidine(1402) in 16S rRNA + S-adenosyl-L-methionine = N(4)-methylcytidine(1402) in 16S rRNA + S-adenosyl-L-homocysteine + H(+). Its function is as follows. Specifically methylates the N4 position of cytidine in position 1402 (C1402) of 16S rRNA. The chain is Ribosomal RNA small subunit methyltransferase H from Chlorobaculum parvum (strain DSM 263 / NCIMB 8327) (Chlorobium vibrioforme subsp. thiosulfatophilum).